The following is a 287-amino-acid chain: uncharacterized protein (287 aa).

Residues 1-20 (MKVICGSVFLFSLFFQVVLG) form the signal peptide. The Extracellular portion of the chain corresponds to 22–201 (YFSSSSGNPN…AFYGPRRNIK (180 aa)). 3 N-linked (GlcNAc...) asparagine glycosylation sites follow: Asn-120, Asn-154, and Asn-166. A helical transmembrane segment spans residues 202–222 (AAIAVPSVILGLILVALVYYA). Residues 223–287 (YRKDTWKIYM…YYQSQVKKFH (65 aa)) are Cytoplasmic-facing.

The protein resides in the membrane. This is an uncharacterized protein from Schizosaccharomyces pombe (strain 972 / ATCC 24843) (Fission yeast).